The following is a 199-amino-acid chain: Chaperone protein TorD (199 aa).

This sequence belongs to the TorD/DmsD family. TorD subfamily.

The protein resides in the cytoplasm. In terms of biological role, involved in the biogenesis of TorA. Acts on TorA before the insertion of the molybdenum cofactor and, as a result, probably favors a conformation of the apoenzyme that is competent for acquiring the cofactor. The sequence is that of Chaperone protein TorD from Escherichia coli O157:H7 (strain EC4115 / EHEC).